Here is a 28-residue protein sequence, read N- to C-terminus: Ranatuerin-2AVb (28 aa).

Residues cysteine 23 and cysteine 28 are joined by a disulfide bond.

As to expression, expressed by the skin glands.

It is found in the secreted. Its function is as follows. Has antibacterial activity. The polypeptide is Ranatuerin-2AVb (Rana arvalis (Moor frog)).